The chain runs to 284 residues: Large ribosomal subunit protein uL2 (284 aa).

Residues arginine 232–lysine 284 form a disordered region. Basic and acidic residues predominate over residues aspartate 240–histidine 250. Positions lysine 264 to lysine 284 are enriched in basic residues.

Belongs to the universal ribosomal protein uL2 family. In terms of assembly, part of the 50S ribosomal subunit. Forms a bridge to the 30S subunit in the 70S ribosome.

In terms of biological role, one of the primary rRNA binding proteins. Required for association of the 30S and 50S subunits to form the 70S ribosome, for tRNA binding and peptide bond formation. It has been suggested to have peptidyltransferase activity; this is somewhat controversial. Makes several contacts with the 16S rRNA in the 70S ribosome. This Chlamydia abortus (strain DSM 27085 / S26/3) (Chlamydophila abortus) protein is Large ribosomal subunit protein uL2.